The chain runs to 152 residues: Protein-export protein SecB (152 aa).

Belongs to the SecB family. Homotetramer, a dimer of dimers. One homotetramer interacts with 1 SecA dimer.

Its subcellular location is the cytoplasm. In terms of biological role, one of the proteins required for the normal export of preproteins out of the cell cytoplasm. It is a molecular chaperone that binds to a subset of precursor proteins, maintaining them in a translocation-competent state. It also specifically binds to its receptor SecA. The polypeptide is Protein-export protein SecB (Rickettsia felis (strain ATCC VR-1525 / URRWXCal2) (Rickettsia azadi)).